The sequence spans 134 residues: Acyl carrier protein SF2, chloroplastic (134 aa).

A chloroplast-targeting transit peptide spans 1-51 (MSTTFCSSVSMQATSLAATTRISFQKPALVSTTNLSFNLRRSIPTRFSISC). A Carrier domain is found at 55–130 (PETVEKVSKI…EAAELIEELV (76 aa)). An O-(pantetheine 4'-phosphoryl)serine modification is found at serine 90.

This sequence belongs to the acyl carrier protein (ACP) family. Post-translationally, 4'-phosphopantetheine is transferred from CoA to a specific serine of apo-ACP by acpS. This modification is essential for activity because fatty acids are bound in thioester linkage to the sulfhydryl of the prosthetic group.

It is found in the plastid. The protein resides in the chloroplast. Its pathway is lipid metabolism; fatty acid biosynthesis. Carrier of the growing fatty acid chain in fatty acid biosynthesis. The polypeptide is Acyl carrier protein SF2, chloroplastic (Acl1.1) (Brassica campestris (Field mustard)).